The primary structure comprises 1336 residues: SH3 domain and tetratricopeptide repeat-containing protein 1 (1336 aa).

Met1 is modified (N-acetylmethionine). 2 disordered regions span residues 1–76 and 225–266; these read MENL…PPCQ and TGPR…SEEV. Over residues 18–27 the composition is skewed to gly residues; that stretch reads GPVGPSGGGS. The segment covering 46 to 61 has biased composition (basic and acidic residues); sequence AGPEEAKAPVRGDEAP. 2 stretches are compositionally biased toward low complexity: residues 62 to 74 and 247 to 266; these read PARVAGPAAGTPP and EAAPETDSSPPSPSVSSEEV. The region spanning 305-368 is the SH3 domain; that stretch reads MAVGLASALA…RSSLISMQGP (64 aa). 8 TPR repeats span residues 560–593, 601–634, 665–698, 786–819, 863–896, 946–979, 1027–1063, and 1192–1225; these read ARLCFLLGRLCSRRLKLSQARVYFEEALGALEGS, VAVYANLASIYRKQKNREKCAQVVPKAMALLLGT, ARACFLLARHHVHLKQPEEALPFLERLLLLHRDS, GPLYTSLAQLYSHHGCHGPAITFMTQAVEASAIA, GVIANMVAVALKRTGRTRQAAESYYRALRVARDL, THVLLQLGHLCTRQGPAQQGKGYYEWALLVAVEM, GQLLETISQLYLSLGTERAYKSALDYTKRSLGIFIDL, and RVAYHRLAALQHRLGHGELAEHFYLKALSLCNSP. Tyr1248 carries the post-translational modification Phosphotyrosine. Residues 1277–1311 form a TPR 9 repeat; that stretch reads LKIYTRLATIYHNFLLDREKSLFFYQKARTFATEL.

The polypeptide is SH3 domain and tetratricopeptide repeat-containing protein 1 (SH3TC1) (Homo sapiens (Human)).